A 167-amino-acid chain; its full sequence is Gametocyte-specific factor 1 homolog (167 aa).

2 CHHC U11-48K-type zinc fingers span residues 1-28 (MVYC…RVIY) and 34-61 (LMVC…EDRN). Zn(2+)-binding residues include Cys4, His10, His20, Cys24, Cys37, His43, His53, and Cys57. Basic and acidic residues predominate over residues 128–161 (EKRRHFGEDYEEEKKPRKAKARADLRPTPYEHRR). A disordered region spans residues 128–167 (EKRRHFGEDYEEEKKPRKAKARADLRPTPYEHRRPYSRRQ).

Belongs to the UPF0224 (FAM112) family. In terms of assembly, interacts with piwi.

The protein localises to the nucleus. Its function is as follows. Acts via the piwi-interacting RNA (piRNA) pathway which mediates the repression of transposable elements during meiosis by forming complexes composed of piRNAs and piwi proteins and governs the methylation and subsequent repression of transposons. Required for repression of transposons and neighboring genes in ovarian somatic and germline cells. This is Gametocyte-specific factor 1 homolog from Drosophila melanogaster (Fruit fly).